The following is a 208-amino-acid chain: NAD(P)H-quinone oxidoreductase subunit I (208 aa).

2 4Fe-4S ferredoxin-type domains span residues 55-84 (GRIHYEFDKCIACEVCVRVCPINLPVVDWV) and 95-124 (RNYSIDFGVCIFCGNCVEYCPTNCLSMTEE). [4Fe-4S] cluster-binding residues include C64, C67, C70, C74, C104, C107, C110, and C114.

It belongs to the complex I 23 kDa subunit family. NDH-1 is composed of at least 11 different subunits. It depends on [4Fe-4S] cluster as a cofactor.

The protein localises to the cellular thylakoid membrane. It carries out the reaction a plastoquinone + NADH + (n+1) H(+)(in) = a plastoquinol + NAD(+) + n H(+)(out). It catalyses the reaction a plastoquinone + NADPH + (n+1) H(+)(in) = a plastoquinol + NADP(+) + n H(+)(out). Functionally, NDH-1 shuttles electrons from an unknown electron donor, via FMN and iron-sulfur (Fe-S) centers, to quinones in the respiratory and/or the photosynthetic chain. The immediate electron acceptor for the enzyme in this species is believed to be plastoquinone. Couples the redox reaction to proton translocation, and thus conserves the redox energy in a proton gradient. The sequence is that of NAD(P)H-quinone oxidoreductase subunit I from Prochlorococcus marinus (strain MIT 9301).